A 245-amino-acid chain; its full sequence is MGKRILVQRRGRGGIQFRSKDHLKIAPARYPQDGMDNLMRGVIKEILHEPGRHTPISLVELENGQEFYYIPPEGVYEGQEIQIGKGAEVKTGNVLPLSEIPDGSLVCNVEIRPGDGGKIARRSGTYAIVFSHEGDKVILRLPSRKEKLVDARCRATIGVVAGSGRIEKPFMKAGIKYYHERTHPKRWPVVRGVAMNPVSHPHGGGSHKRPGKPTTVARTAPPGQKVGHIAARKTGRAKRRAATKR.

A disordered region spans residues 198–245 (VSHPHGGGSHKRPGKPTTVARTAPPGQKVGHIAARKTGRAKRRAATKR). Residues 230-245 (AARKTGRAKRRAATKR) show a composition bias toward basic residues.

This sequence belongs to the universal ribosomal protein uL2 family. Part of the 50S ribosomal subunit. Forms a bridge to the 30S subunit in the 70S ribosome.

Functionally, one of the primary rRNA binding proteins. Required for association of the 30S and 50S subunits to form the 70S ribosome, for tRNA binding and peptide bond formation. It has been suggested to have peptidyltransferase activity; this is somewhat controversial. Makes several contacts with the 16S rRNA in the 70S ribosome. The polypeptide is Large ribosomal subunit protein uL2 (Korarchaeum cryptofilum (strain OPF8)).